We begin with the raw amino-acid sequence, 372 residues long: N-methyl-L-tryptophan oxidase (372 aa).

4-34 lines the FAD pocket; it reads DLIIIGSGSVGAAAGYYATRAGLNVLMTDAH. C308 carries the S-8alpha-FAD cysteine modification.

It belongs to the MSOX/MTOX family. MTOX subfamily. As to quaternary structure, monomer. FAD serves as cofactor.

The catalysed reaction is N(alpha)-methyl-L-tryptophan + O2 + H2O = L-tryptophan + formaldehyde + H2O2. Its function is as follows. Catalyzes the oxidative demethylation of N-methyl-L-tryptophan. In Shigella sonnei (strain Ss046), this protein is N-methyl-L-tryptophan oxidase.